Here is a 305-residue protein sequence, read N- to C-terminus: PI-PLC X domain-containing protein 2 (305 aa).

Residues H42–C215 enclose the PI-PLC X-box domain. Active-site residues include H57 and H132.

In terms of tissue distribution, widely expressed.

It localises to the nucleus. The catalysed reaction is a 1,2-diacyl-sn-glycero-3-phospho-(1D-myo-inositol) + H2O = 1D-myo-inositol 1-phosphate + a 1,2-diacyl-sn-glycerol + H(+). Its function is as follows. Catalyzes the hydrolysis of inositol from phosphatidylinositol (1,2-diacyl-sn-glycero-3-phospho-(1D-myo-inositol), PI). Could also hydrolyze various multi-phosphorylated derivatives of PI, such as phosphatidylinositol-4,5 bisphosphate (PIP2), releasing inositol-1,4,5-trisphosphate (IP3) and the protein kinase C activator diacylglycerol (DAG), therefore mediating cell signaling. The chain is PI-PLC X domain-containing protein 2 (PLCXD2) from Homo sapiens (Human).